We begin with the raw amino-acid sequence, 396 residues long: Ribosomal RNA large subunit methyltransferase I (396 aa).

In terms of domain architecture, PUA spans 2–79; it reads AIRIKLKPGR…REEEIDREFF (78 aa).

The protein belongs to the methyltransferase superfamily. RlmI family.

It is found in the cytoplasm. The enzyme catalyses cytidine(1962) in 23S rRNA + S-adenosyl-L-methionine = 5-methylcytidine(1962) in 23S rRNA + S-adenosyl-L-homocysteine + H(+). Its function is as follows. Specifically methylates the cytosine at position 1962 (m5C1962) of 23S rRNA. The chain is Ribosomal RNA large subunit methyltransferase I from Shewanella baltica (strain OS155 / ATCC BAA-1091).